Reading from the N-terminus, the 246-residue chain is 2',3'-cyclic-nucleotide 3'-phosphodiesterase (246 aa).

Residue His-40 is the Proton donor/acceptor of the active site. Position 42 (Thr-42) interacts with substrate. Positions Gln-133–Thr-146 are enriched in polar residues. The segment at Gln-133–Thr-159 is disordered. Over residues Ile-147–Ser-156 the composition is skewed to basic residues. The active-site Proton donor/acceptor is the His-188. Residues Ser-190 and Tyr-193 each contribute to the substrate site.

This sequence belongs to the 2H phosphoesterase superfamily. CPD1 family.

The protein resides in the golgi apparatus. The enzyme catalyses a nucleoside 2',3'-cyclic phosphate + H2O = a nucleoside 2'-phosphate + H(+). Its function is as follows. Involved in the metabolism of ADP-ribose 1',2'-cyclic phosphate which is produced as a consequence of tRNA splicing. This is 2',3'-cyclic-nucleotide 3'-phosphodiesterase (CPD1) from Candida albicans (strain SC5314 / ATCC MYA-2876) (Yeast).